The sequence spans 147 residues: Hemoglobin subunit gamma (147 aa).

The 145-residue stretch at 3–147 (HFTVEEKAVI…VAIALAHKYH (145 aa)) folds into the Globin domain. Residues H64 and H93 each coordinate heme b.

This sequence belongs to the globin family. As to quaternary structure, heterotetramer of two alpha chains and two gamma chains in fetal hemoglobin (Hb F). In terms of tissue distribution, red blood cells.

Gamma chains make up the fetal hemoglobin F, in combination with alpha chains. In Cheirogaleus medius (Fat-tailed dwarf lemur), this protein is Hemoglobin subunit gamma (HBG).